A 520-amino-acid polypeptide reads, in one-letter code: Cholesterol side-chain cleavage enzyme, mitochondrial (520 aa).

A mitochondrion-targeting transit peptide spans 1 to 39 (MLARGLPFRSALVKACPPLLNTGREGWGHHRVGTGEGAG). Positions 27–47 (WGHHRVGTGEGAGISTRTPRP) are disordered. Residue Cys461 participates in heme binding.

Belongs to the cytochrome P450 family. As to quaternary structure, interacts with FDX1/adrenodoxin. It depends on heme as a cofactor.

It is found in the mitochondrion inner membrane. It carries out the reaction 6 reduced [adrenodoxin] + cholesterol + 3 O2 + 6 H(+) = 4-methylpentanal + pregnenolone + 6 oxidized [adrenodoxin] + 4 H2O. The enzyme catalyses 2 reduced [adrenodoxin] + cholesterol + O2 + 2 H(+) = (22R)-hydroxycholesterol + 2 oxidized [adrenodoxin] + H2O. The catalysed reaction is (22R)-hydroxycholesterol + 2 reduced [adrenodoxin] + O2 + 2 H(+) = (20R,22R)-20,22-dihydroxycholesterol + 2 oxidized [adrenodoxin] + H2O. It catalyses the reaction (20R,22R)-20,22-dihydroxycholesterol + 2 reduced [adrenodoxin] + O2 + 2 H(+) = 4-methylpentanal + pregnenolone + 2 oxidized [adrenodoxin] + 2 H2O. It participates in lipid metabolism; C21-steroid hormone metabolism. Its pathway is steroid metabolism; cholesterol metabolism. Its function is as follows. A cytochrome P450 monooxygenase that catalyzes the side-chain hydroxylation and cleavage of cholesterol to pregnenolone, the precursor of most steroid hormones. Catalyzes three sequential oxidation reactions of cholesterol, namely the hydroxylation at C22 followed with the hydroxylation at C20 to yield 20R,22R-hydroxycholesterol that is further cleaved between C20 and C22 to yield the C21-steroid pregnenolone and 4-methylpentanal. Mechanistically, uses molecular oxygen inserting one oxygen atom into a substrate and reducing the second into a water molecule. Two electrons are provided by NADPH via a two-protein mitochondrial transfer system comprising flavoprotein FDXR (adrenodoxin/ferredoxin reductase) and nonheme iron-sulfur protein FDX1 or FDX2 (adrenodoxin/ferredoxin). The polypeptide is Cholesterol side-chain cleavage enzyme, mitochondrial (Ovis aries (Sheep)).